The sequence spans 117 residues: Large ribosomal subunit protein uL22 (117 aa).

It belongs to the universal ribosomal protein uL22 family. In terms of assembly, part of the 50S ribosomal subunit.

Its function is as follows. This protein binds specifically to 23S rRNA; its binding is stimulated by other ribosomal proteins, e.g. L4, L17, and L20. It is important during the early stages of 50S assembly. It makes multiple contacts with different domains of the 23S rRNA in the assembled 50S subunit and ribosome. Functionally, the globular domain of the protein is located near the polypeptide exit tunnel on the outside of the subunit, while an extended beta-hairpin is found that lines the wall of the exit tunnel in the center of the 70S ribosome. The sequence is that of Large ribosomal subunit protein uL22 from Chlorobium phaeobacteroides (strain BS1).